The sequence spans 398 residues: Acetate kinase (398 aa).

Asn-7 serves as a coordination point for Mg(2+). Lys-14 contacts ATP. Arg-91 contacts substrate. The active-site Proton donor/acceptor is Asp-148. ATP-binding positions include 208-212, 283-285, and 331-335; these read HLGNG, DSR, and GIGEN. Glu-384 lines the Mg(2+) pocket.

It belongs to the acetokinase family. Homodimer. Mg(2+) is required as a cofactor. Mn(2+) serves as cofactor.

The protein resides in the cytoplasm. It catalyses the reaction acetate + ATP = acetyl phosphate + ADP. Its pathway is metabolic intermediate biosynthesis; acetyl-CoA biosynthesis; acetyl-CoA from acetate: step 1/2. Functionally, catalyzes the formation of acetyl phosphate from acetate and ATP. Can also catalyze the reverse reaction. This is Acetate kinase from Halothermothrix orenii (strain H 168 / OCM 544 / DSM 9562).